Reading from the N-terminus, the 240-residue chain is GATA transcription factor 4 (240 aa).

Positions 104-124 are disordered; that stretch reads ISFTGKPRSRRSRAPAPSVAG. The short motif at 109–116 is the Nuclear localization signal element; the sequence is KPRSRRSR. A GATA-type zinc finger spans residues 154–208; that stretch reads ADGARRCTHCASEKTPQWRTGPLGPKTLCNACGVRYKSGRLVPEYRPASSPTFVL.

This sequence belongs to the type IV zinc-finger family. Class A subfamily. As to expression, expressed in roots, flowers and leaves, and to a lower extent in stems.

It is found in the nucleus. Functionally, transcriptional activator that specifically binds 5'-GATA-3' or 5'-GAT-3' motifs within gene promoters. May be involved in the regulation of some light-responsive genes. The chain is GATA transcription factor 4 (GATA4) from Arabidopsis thaliana (Mouse-ear cress).